The following is a 604-amino-acid chain: Glutamine--fructose-6-phosphate aminotransferase [isomerizing] (604 aa).

Cys2 acts as the Nucleophile; for GATase activity in catalysis. Residues 2–216 (CGIVGYVGFR…DGDVVRLTRE (215 aa)) form the Glutamine amidotransferase type-2 domain. SIS domains lie at 281–420 (LALD…ARGA) and 453–594 (VAEK…VDQP). The active-site For Fru-6P isomerization activity is Lys599.

Homodimer.

It localises to the cytoplasm. The catalysed reaction is D-fructose 6-phosphate + L-glutamine = D-glucosamine 6-phosphate + L-glutamate. Functionally, catalyzes the first step in hexosamine metabolism, converting fructose-6P into glucosamine-6P using glutamine as a nitrogen source. The protein is Glutamine--fructose-6-phosphate aminotransferase [isomerizing] of Thermus thermophilus (strain ATCC BAA-163 / DSM 7039 / HB27).